The primary structure comprises 102 residues: UPF0213 protein XCC3072 (102 aa).

Positions 5 to 80 constitute a GIY-YIG domain; sequence KPWHLYLLLC…KQQPRARKLA (76 aa).

The protein belongs to the UPF0213 family.

The protein is UPF0213 protein XCC3072 of Xanthomonas campestris pv. campestris (strain ATCC 33913 / DSM 3586 / NCPPB 528 / LMG 568 / P 25).